Here is a 344-residue protein sequence, read N- to C-terminus: L-rhamnose-proton symporter (344 aa).

10 consecutive transmembrane segments (helical) span residues 4 to 24 (AITM…CFYA), 38 to 58 (WSVG…ALLL), 68 to 88 (FSLS…IGNI), 101 to 121 (MGIG…TPII), 137 to 157 (TLLG…AGQL), 175 to 195 (LVLA…MNAA), 214 to 234 (LPSY…FCFI), 259 to 279 (VLLS…YAWG), 290 to 310 (ISWM…GLVL), and 323 to 343 (VLSL…IGMA).

This sequence belongs to the L-rhamnose transporter (TC 2.A.7.6) family.

The protein localises to the cell inner membrane. The enzyme catalyses L-rhamnopyranose(in) + H(+)(in) = L-rhamnopyranose(out) + H(+)(out). Functionally, uptake of L-rhamnose across the cytoplasmic membrane with the concomitant transport of protons into the cell (symport system). In Escherichia coli (strain 55989 / EAEC), this protein is L-rhamnose-proton symporter.